The chain runs to 450 residues: Keratin, type I cytoskeletal 25 (450 aa).

Residues 1-24 are disordered; that stretch reads MSLRLPSGSRRASPRPTTGSLRLS. Positions 1 to 78 are head; that stretch reads MSLRLPSGSR…MNEGGLLSGN (78 aa). The segment at 79 to 114 is coil 1A; it reads EKVTMQNLNDRLASYLENVRALEEANADLEQKIKGW. The region spanning 79-394 is the IF rod domain; sequence EKVTMQNLND…LLIGGDDGAC (316 aa). Residues 115–136 are linker 1; it reads YEKFGPGSCRGLDHDYSRYFPI. A coil 1B region spans residues 137-228; sequence IEDLKNQIIA…KNHKEEMQVL (92 aa). The linker 12 stretch occupies residues 229–251; the sequence is QCAAGGNVNVEMNAAPGVDLTVL. Residues 252 to 390 form a coil 2 region; sequence LNNMRAEYEA…ETYCLLIGGD (139 aa). The tract at residues 391–450 is tail; that stretch reads DGACKSGGYKSKDYAAGNMGNQMKDPIKAIVVKKVLEEVDQRSKILTTRLHSLEEKSQSN. Serine 442 bears the Phosphoserine mark.

The protein belongs to the intermediate filament family. Heterodimer of a type I and a type II keratin. Heterodimer with type II keratin KRT5 leading to the formation of keratin intermediate filament (KIF) network. Interacts with KRT6A to form filaments.

The protein localises to the cytoplasm. In terms of biological role, essential for the proper assembly of type I and type II keratin protein complexes and formation of keratin intermediate filaments in the inner root sheath (irs). Plays a role in the cytoskeleton organization. The sequence is that of Keratin, type I cytoskeletal 25 from Capra hircus (Goat).